The chain runs to 233 residues: 2-C-methyl-D-erythritol 4-phosphate cytidylyltransferase (233 aa).

This sequence belongs to the IspD/TarI cytidylyltransferase family. IspD subfamily.

The catalysed reaction is 2-C-methyl-D-erythritol 4-phosphate + CTP + H(+) = 4-CDP-2-C-methyl-D-erythritol + diphosphate. It functions in the pathway isoprenoid biosynthesis; isopentenyl diphosphate biosynthesis via DXP pathway; isopentenyl diphosphate from 1-deoxy-D-xylulose 5-phosphate: step 2/6. Its function is as follows. Catalyzes the formation of 4-diphosphocytidyl-2-C-methyl-D-erythritol from CTP and 2-C-methyl-D-erythritol 4-phosphate (MEP). This chain is 2-C-methyl-D-erythritol 4-phosphate cytidylyltransferase, found in Aromatoleum aromaticum (strain DSM 19018 / LMG 30748 / EbN1) (Azoarcus sp. (strain EbN1)).